Here is a 399-residue protein sequence, read N- to C-terminus: Succinate--CoA ligase [ADP-forming] subunit beta (399 aa).

One can recognise an ATP-grasp domain in the interval 9 to 254; it reads KELLAKFGVA…ETEEDPAEIE (246 aa). Residues Lys46, 53–55, Ala112, and Glu117 each bind ATP; that span reads GRG. The Mg(2+) site is built by Asn209 and Asp223. Substrate-binding positions include Asn274 and 331–333; that span reads GIM.

The protein belongs to the succinate/malate CoA ligase beta subunit family. In terms of assembly, heterotetramer of two alpha and two beta subunits. Mg(2+) is required as a cofactor.

It carries out the reaction succinate + ATP + CoA = succinyl-CoA + ADP + phosphate. The enzyme catalyses GTP + succinate + CoA = succinyl-CoA + GDP + phosphate. It participates in carbohydrate metabolism; tricarboxylic acid cycle; succinate from succinyl-CoA (ligase route): step 1/1. Its function is as follows. Succinyl-CoA synthetase functions in the citric acid cycle (TCA), coupling the hydrolysis of succinyl-CoA to the synthesis of either ATP or GTP and thus represents the only step of substrate-level phosphorylation in the TCA. The beta subunit provides nucleotide specificity of the enzyme and binds the substrate succinate, while the binding sites for coenzyme A and phosphate are found in the alpha subunit. In Rhizorhabdus wittichii (strain DSM 6014 / CCUG 31198 / JCM 15750 / NBRC 105917 / EY 4224 / RW1) (Sphingomonas wittichii), this protein is Succinate--CoA ligase [ADP-forming] subunit beta.